Here is a 100-residue protein sequence, read N- to C-terminus: MSHTIVLLQTTMGKSSRTFMDYESVNQAIEGICNMYEQRLKQERPNQKNITYDISQLFKFIDSLADLSCLVYTSHINAYTPYNKEWIKTKIINHLQKLAQ.

It belongs to the E(R) family. Homodimer.

Its function is as follows. May have a role in the cell cycle. The protein is Enhancer of rudimentary homolog (erh) of Dictyostelium discoideum (Social amoeba).